The primary structure comprises 152 residues: Deoxyuridine 5'-triphosphate nucleotidohydrolase (152 aa).

Substrate-binding positions include 71-73, N84, 88-90, and M98; these read RSG and LID.

This sequence belongs to the dUTPase family. Homotrimer. It depends on Mg(2+) as a cofactor.

It catalyses the reaction dUTP + H2O = dUMP + diphosphate + H(+). Its pathway is pyrimidine metabolism; dUMP biosynthesis; dUMP from dCTP (dUTP route): step 2/2. Functionally, this enzyme is involved in nucleotide metabolism: it produces dUMP, the immediate precursor of thymidine nucleotides and it decreases the intracellular concentration of dUTP so that uracil cannot be incorporated into DNA. This is Deoxyuridine 5'-triphosphate nucleotidohydrolase from Escherichia coli O1:K1 / APEC.